Consider the following 58-residue polypeptide: Large ribosomal subunit protein uL30 (58 aa).

It belongs to the universal ribosomal protein uL30 family. As to quaternary structure, part of the 50S ribosomal subunit.

The chain is Large ribosomal subunit protein uL30 from Pseudomonas fluorescens (strain ATCC BAA-477 / NRRL B-23932 / Pf-5).